The primary structure comprises 1001 residues: UPF0182 protein Mjls_1469 (1001 aa).

7 helical membrane-spanning segments follow: residues 16–36 (VLIG…RFID), 61–81 (VVVF…GLAL), 112–132 (LFGF…AQSY), 174–194 (FVAT…FGGI), 209–229 (IQLV…YWLD), 258–278 (KLIL…AIVL), and 286–306 (IGVV…PLVV). The segment covering 900-929 (ATGPAPANLPDGQPAAQPPNGQQPAAQTPG) has biased composition (low complexity). The interval 900 to 977 (ATGPAPANLP…MSGLQDAQRS (78 aa)) is disordered.

The protein belongs to the UPF0182 family.

The protein localises to the cell membrane. The sequence is that of UPF0182 protein Mjls_1469 from Mycobacterium sp. (strain JLS).